A 113-amino-acid chain; its full sequence is Small ribosomal subunit protein uS14m (113 aa).

Belongs to the universal ribosomal protein uS14 family. As to quaternary structure, component of the mitochondrial small ribosomal subunit (mt-SSU). Mature N.crassa 74S mitochondrial ribosomes consist of a small (37S) and a large (54S) subunit. The 37S small subunit contains a 16S ribosomal RNA (16S mt-rRNA) and 32 different proteins. The 54S large subunit contains a 23S rRNA (23S mt-rRNA) and 42 different proteins.

The protein localises to the mitochondrion. Component of the mitochondrial ribosome (mitoribosome), a dedicated translation machinery responsible for the synthesis of mitochondrial genome-encoded proteins, including at least some of the essential transmembrane subunits of the mitochondrial respiratory chain. The mitoribosomes are attached to the mitochondrial inner membrane and translation products are cotranslationally integrated into the membrane. The sequence is that of Small ribosomal subunit protein uS14m (mrp2) from Neurospora crassa (strain ATCC 24698 / 74-OR23-1A / CBS 708.71 / DSM 1257 / FGSC 987).